The sequence spans 300 residues: tRNA dimethylallyltransferase 1 (300 aa).

Residue 13–20 coordinates ATP; sequence GPTGVGKT. Substrate is bound at residue 15–20; the sequence is TGVGKT. The tract at residues 38-41 is interaction with substrate tRNA; sequence DSRQ.

Belongs to the IPP transferase family. As to quaternary structure, monomer. Requires Mg(2+) as cofactor.

The catalysed reaction is adenosine(37) in tRNA + dimethylallyl diphosphate = N(6)-dimethylallyladenosine(37) in tRNA + diphosphate. Its function is as follows. Catalyzes the transfer of a dimethylallyl group onto the adenine at position 37 in tRNAs that read codons beginning with uridine, leading to the formation of N6-(dimethylallyl)adenosine (i(6)A). This is tRNA dimethylallyltransferase 1 from Porphyromonas gingivalis (strain ATCC BAA-308 / W83).